The following is a 115-amino-acid chain: Inner membrane protein YidH (115 aa).

At 1–30 (MKISRLGEAPDYRFSLANERTFLAWIRTAL) the chain is on the cytoplasmic side. A helical membrane pass occupies residues 31-51 (GFLAAGVGLDQLAPDFATPVI). Residues 52–53 (RE) lie on the Periplasmic side of the membrane. Residues 54–74 (LLALLLCLFSGGLAMYGYLRW) traverse the membrane as a helical segment. The Cytoplasmic portion of the chain corresponds to 75–92 (LRNEKAMRLKEDLPYTNS). The chain crosses the membrane as a helical span at residues 93-113 (LLIISLILMVVAVIVMGLVLY). Topologically, residues 114–115 (AG) are periplasmic.

To M.tuberculosis Rv2272.

Its subcellular location is the cell inner membrane. In Escherichia coli O157:H7, this protein is Inner membrane protein YidH (yidH).